Reading from the N-terminus, the 373-residue chain is UDP-N-acetylglucosamine--N-acetylmuramyl-(pentapeptide) pyrophosphoryl-undecaprenol N-acetylglucosamine transferase (373 aa).

UDP-N-acetyl-alpha-D-glucosamine-binding positions include 14-16, Asn-128, Arg-165, Ser-199, and Gln-295; that span reads TAG.

The protein belongs to the glycosyltransferase 28 family. MurG subfamily.

The protein resides in the cell membrane. It catalyses the reaction di-trans,octa-cis-undecaprenyl diphospho-N-acetyl-alpha-D-muramoyl-L-alanyl-D-glutamyl-meso-2,6-diaminopimeloyl-D-alanyl-D-alanine + UDP-N-acetyl-alpha-D-glucosamine = di-trans,octa-cis-undecaprenyl diphospho-[N-acetyl-alpha-D-glucosaminyl-(1-&gt;4)]-N-acetyl-alpha-D-muramoyl-L-alanyl-D-glutamyl-meso-2,6-diaminopimeloyl-D-alanyl-D-alanine + UDP + H(+). It participates in cell wall biogenesis; peptidoglycan biosynthesis. Functionally, cell wall formation. Catalyzes the transfer of a GlcNAc subunit on undecaprenyl-pyrophosphoryl-MurNAc-pentapeptide (lipid intermediate I) to form undecaprenyl-pyrophosphoryl-MurNAc-(pentapeptide)GlcNAc (lipid intermediate II). In Mycobacterium sp. (strain JLS), this protein is UDP-N-acetylglucosamine--N-acetylmuramyl-(pentapeptide) pyrophosphoryl-undecaprenol N-acetylglucosamine transferase.